Here is a 396-residue protein sequence, read N- to C-terminus: Odorant receptor 49a (396 aa).

The Cytoplasmic segment spans residues 1–6 (MEKLRS). Residues 7-27 (YEDFIFMANMMFKTLGYDLFH) form a helical membrane-spanning segment. Topologically, residues 28 to 34 (TPKPWWR) are extracellular. The helical transmembrane segment at 35–55 (YLLVRGYFVLCTISNFYEASM) threads the bilayer. The Cytoplasmic segment spans residues 56 to 70 (VTTRIIEWESLAGSP). Residues 71–91 (SKIMRQGLHFFYMLSSQLKFI) traverse the membrane as a helical segment. Topologically, residues 92–141 (TFMINRKRLLQLSHRLKELYPHKEQNQRKYEVNKYYLSCSTRNVLYVYYF) are extracellular. Residues 142 to 162 (VMVVMALEPLVQSCIMYLIGF) traverse the membrane as a helical segment. Topologically, residues 163–209 (GKADFTYKRIFPTRLTFDSEKPLGYVLAYVIDFTYSQFIVNVSLGTD) are cytoplasmic. Residues 210 to 230 (LWMMCVSSQISMHLGYLANML) traverse the membrane as a helical segment. Topologically, residues 231–266 (ASIRPSPETEQQDCDFLASIIKRHQLMIRLQKDVNY) are extracellular. A helical transmembrane segment spans residues 267-287 (VFGLLLASNLFTTSCLLCCMA). Over 288–296 (YYTVVEGFN) the chain is Cytoplasmic. Residues 297–317 (WEGISYMMLFASVAAQFYVVS) form a helical membrane-spanning segment. At 318–396 (SHGQMLIDLS…FAVIRQTVEK (79 aa)) the chain is on the extracellular side.

The protein belongs to the insect chemoreceptor superfamily. Heteromeric odorant receptor channel (TC 1.A.69) family. Or49a subfamily. In terms of assembly, interacts with Orco. Complexes exist early in the endomembrane system in olfactory sensory neurons (OSNs), coupling these complexes to the conserved ciliary trafficking pathway.

The protein localises to the cell membrane. Its function is as follows. Odorant receptor which mediates acceptance or avoidance behavior, depending on its substrates. The odorant receptor repertoire encodes a large collection of odor stimuli that vary widely in identity, intensity, and duration. May form a complex with Orco to form odorant-sensing units, providing sensitive and prolonged odorant signaling and calcium permeability. Involved in the behavioral responses to butanol and 2-heptanone. This chain is Odorant receptor 49a (Or49a), found in Drosophila melanogaster (Fruit fly).